The sequence spans 251 residues: Chloride intracellular channel protein 5 (251 aa).

Residues 1 to 98 (MTDSATTNGD…EEFLEETLTP (98 aa)) form a required for insertion into the membrane region. Residues 32–35 (CPFS) carry the G-site motif. Residues 34 to 54 (FSQRLFMILWLKGVVFNVTTV) form a helical membrane-spanning segment. One can recognise a GST C-terminal domain in the interval 101–241 (YPKLAAKHRE…AADSEIELAY (141 aa)).

It belongs to the chloride channel CLIC family. As to quaternary structure, component of a multimeric complex consisting of several cytoskeletal proteins, including actin, ezrin, alpha-actinin, gelsolin, and IQGAP1. Interacts with AKAP9. Interacts with TPRN. TPRN, CLIC5 and PTPQR form concentric rings at the base of stereocilia and may form a complex. Interacts with EZR, MYO6 and RDX; the proteins may work together as a complex to stabilize linkages between the plasma membrane and subjacent actin cytoskeleton at the stereocilium base. Detected in lung and inner ear. Detected in embryonic cochlea, on microvilli-covered apical surfaces of interdental cells, columnar cells of Kolliker's organ, and on stereocilia of inner and outer hair cells (at protein level). Also detected in the eye, where it localizes to lens fiber cells in the lens epithelium (at protein level).

Its subcellular location is the golgi apparatus. The protein localises to the cytoplasm. It is found in the cytoskeleton. It localises to the microtubule organizing center. The protein resides in the centrosome. Its subcellular location is the cell cortex. The protein localises to the membrane. It is found in the apical cell membrane. It localises to the mitochondrion. The protein resides in the cell projection. Its subcellular location is the stereocilium. The enzyme catalyses Na(+)(in) = Na(+)(out). It catalyses the reaction K(+)(in) = K(+)(out). The catalysed reaction is chloride(in) = chloride(out). With respect to regulation, inhibited by F-actin. Its function is as follows. In the soluble state, catalyzes glutaredoxin-like thiol disulfide exchange reactions with reduced glutathione as electron donor. Can insert into membranes and form non-selective ion channels almost equally permeable to Na(+), K(+) and Cl(-). Required for normal hearing. Necessary for the formation of stereocilia in the inner ear and normal development of the organ of Corti. Required for the proper localization of PTPRQ and RDX to the stereocilium base during postnatal maturation of hair bundles. Can insert into membranes and form poorly selective ion channels that may also transport chloride ions. Required for the development and/or maintenance of the proper glomerular endothelial cell and podocyte architecture. Plays a role in formation of the lens suture in the eye, which is important for normal optical properties of the lens. This Mus musculus (Mouse) protein is Chloride intracellular channel protein 5 (Clic5).